The following is a 194-amino-acid chain: Phosphoheptose isomerase (194 aa).

Positions 37–194 (ISNSFKQGGK…LIEFEMAKQA (158 aa)) constitute an SIS domain. 52 to 54 (NGG) serves as a coordination point for substrate. Zn(2+)-binding residues include H61 and E65. Residues E65, 93–94 (ND), 119–121 (STS), S124, and Q172 contribute to the substrate site. Zn(2+) contacts are provided by Q172 and H180.

Belongs to the SIS family. GmhA subfamily. In terms of assembly, homotetramer. It depends on Zn(2+) as a cofactor.

It localises to the cytoplasm. It carries out the reaction 2 D-sedoheptulose 7-phosphate = D-glycero-alpha-D-manno-heptose 7-phosphate + D-glycero-beta-D-manno-heptose 7-phosphate. It functions in the pathway carbohydrate biosynthesis; D-glycero-D-manno-heptose 7-phosphate biosynthesis; D-glycero-alpha-D-manno-heptose 7-phosphate and D-glycero-beta-D-manno-heptose 7-phosphate from sedoheptulose 7-phosphate: step 1/1. Functionally, catalyzes the isomerization of sedoheptulose 7-phosphate in D-glycero-D-manno-heptose 7-phosphate. This Haemophilus influenzae (strain PittEE) protein is Phosphoheptose isomerase.